The sequence spans 60 residues: Cecropin-B type 1 (60 aa).

Positions 1 to 24 (MNFNKLFALVLLIGLVLLTGQTEA) are cleaved as a signal peptide. The residue at position 58 (I58) is an Isoleucine amide.

This sequence belongs to the cecropin family.

The protein localises to the secreted. Cecropins have lytic and antibacterial activity against several Gram-positive and Gram-negative bacteria. The chain is Cecropin-B type 1 (CECB1) from Aedes albopictus (Asian tiger mosquito).